The following is a 459-amino-acid chain: UDP-N-acetylmuramate--L-alanine ligase (459 aa).

Glycine 118–threonine 124 is an ATP binding site.

Belongs to the MurCDEF family.

The protein resides in the cytoplasm. It catalyses the reaction UDP-N-acetyl-alpha-D-muramate + L-alanine + ATP = UDP-N-acetyl-alpha-D-muramoyl-L-alanine + ADP + phosphate + H(+). The protein operates within cell wall biogenesis; peptidoglycan biosynthesis. Its function is as follows. Cell wall formation. The sequence is that of UDP-N-acetylmuramate--L-alanine ligase from Lachnospira eligens (strain ATCC 27750 / DSM 3376 / VPI C15-48 / C15-B4) (Eubacterium eligens).